A 416-amino-acid chain; its full sequence is Adenylosuccinate synthetase (416 aa).

Residues 13–19 and 41–43 contribute to the GTP site; these read GDEGKGK and GHT. D14 (proton acceptor) is an active-site residue. Mg(2+) is bound by residues D14 and G41. IMP contacts are provided by residues 14-17, 39-42, T126, R140, Q220, T235, and R299; these read DEGK and NAGH. The active-site Proton donor is the H42. 295 to 301 serves as a coordination point for substrate; it reads TTTGRKR. GTP-binding positions include R301, 327–329, and 405–407; these read KLD and STS.

This sequence belongs to the adenylosuccinate synthetase family. As to quaternary structure, homodimer. It depends on Mg(2+) as a cofactor.

The protein localises to the cytoplasm. The enzyme catalyses IMP + L-aspartate + GTP = N(6)-(1,2-dicarboxyethyl)-AMP + GDP + phosphate + 2 H(+). The protein operates within purine metabolism; AMP biosynthesis via de novo pathway; AMP from IMP: step 1/2. Its function is as follows. Plays an important role in the de novo pathway of purine nucleotide biosynthesis. Catalyzes the first committed step in the biosynthesis of AMP from IMP. The protein is Adenylosuccinate synthetase of Campylobacter fetus subsp. fetus (strain 82-40).